The primary structure comprises 456 residues: tRNA(Ile)-lysidine synthase (456 aa).

27–32 (SGGVDS) contacts ATP.

The protein belongs to the tRNA(Ile)-lysidine synthase family.

It is found in the cytoplasm. The enzyme catalyses cytidine(34) in tRNA(Ile2) + L-lysine + ATP = lysidine(34) in tRNA(Ile2) + AMP + diphosphate + H(+). Functionally, ligates lysine onto the cytidine present at position 34 of the AUA codon-specific tRNA(Ile) that contains the anticodon CAU, in an ATP-dependent manner. Cytidine is converted to lysidine, thus changing the amino acid specificity of the tRNA from methionine to isoleucine. The chain is tRNA(Ile)-lysidine synthase from Vibrio atlanticus (strain LGP32) (Vibrio splendidus (strain Mel32)).